The chain runs to 285 residues: UPF0354 protein SH1179 (285 aa).

Belongs to the UPF0354 family.

The protein is UPF0354 protein SH1179 of Staphylococcus haemolyticus (strain JCSC1435).